Here is a 241-residue protein sequence, read N- to C-terminus: Tetrahydromethanopterin S-methyltransferase subunit A (241 aa).

Residues 1–220 (MANKREPAPG…AKWQAGYYNG (220 aa)) lie on the Cytoplasmic side of the membrane. 5-hydroxybenzimidazolylcob(I)amide is bound at residue H85. A helical membrane pass occupies residues 221-241 (KIQGIATGLFLMLLIMGILMF).

This sequence belongs to the MtrA family. The complex is composed of 8 subunits; MtrA, MtrB, MtrC, MtrD, MtrE, MtrF, MtrG and MtrH. It depends on 5-hydroxybenzimidazolylcob(I)amide as a cofactor.

It is found in the cell membrane. The catalysed reaction is 5-methyl-5,6,7,8-tetrahydromethanopterin + coenzyme M + 2 Na(+)(in) = 5,6,7,8-tetrahydromethanopterin + methyl-coenzyme M + 2 Na(+)(out). It participates in one-carbon metabolism; methanogenesis from CO(2); methyl-coenzyme M from 5,10-methylene-5,6,7,8-tetrahydromethanopterin: step 2/2. Functionally, part of a complex that catalyzes the formation of methyl-coenzyme M and tetrahydromethanopterin from coenzyme M and methyl-tetrahydromethanopterin. This is an energy-conserving, sodium-ion translocating step. This chain is Tetrahydromethanopterin S-methyltransferase subunit A, found in Methanocaldococcus jannaschii (strain ATCC 43067 / DSM 2661 / JAL-1 / JCM 10045 / NBRC 100440) (Methanococcus jannaschii).